The primary structure comprises 203 residues: Holliday junction branch migration complex subunit RuvA (203 aa).

Residues 1-64 (MFAYFRGRLT…EDAFLLYGFS (64 aa)) form a domain I region. The domain II stretch occupies residues 65 to 143 (SESERQLFRL…KMSPDGGKTI (79 aa)). Residues 144 to 150 (ASGSGGN) are flexible linker. The tract at residues 151 to 203 (LALQIKDDALNALITLGFSKPAAQKAVTGILEGNPSLSVEEVVKSALVSIHNS) is domain III.

It belongs to the RuvA family. Homotetramer. Forms an RuvA(8)-RuvB(12)-Holliday junction (HJ) complex. HJ DNA is sandwiched between 2 RuvA tetramers; dsDNA enters through RuvA and exits via RuvB. An RuvB hexamer assembles on each DNA strand where it exits the tetramer. Each RuvB hexamer is contacted by two RuvA subunits (via domain III) on 2 adjacent RuvB subunits; this complex drives branch migration. In the full resolvosome a probable DNA-RuvA(4)-RuvB(12)-RuvC(2) complex forms which resolves the HJ.

It localises to the cytoplasm. Its function is as follows. The RuvA-RuvB-RuvC complex processes Holliday junction (HJ) DNA during genetic recombination and DNA repair, while the RuvA-RuvB complex plays an important role in the rescue of blocked DNA replication forks via replication fork reversal (RFR). RuvA specifically binds to HJ cruciform DNA, conferring on it an open structure. The RuvB hexamer acts as an ATP-dependent pump, pulling dsDNA into and through the RuvAB complex. HJ branch migration allows RuvC to scan DNA until it finds its consensus sequence, where it cleaves and resolves the cruciform DNA. In Chlorobium limicola (strain DSM 245 / NBRC 103803 / 6330), this protein is Holliday junction branch migration complex subunit RuvA.